The chain runs to 404 residues: Endophilin-B2 (404 aa).

Met1 is subject to N-acetylmethionine. The membrane-binding amphipathic helix stretch occupies residues 1–27; that stretch reads MDFNMKKLASDAGIFFTRAVQFTEEKF. Ser10 carries the post-translational modification Phosphoserine. In terms of domain architecture, BAR spans 24–291; it reads EEKFGQAEKT…LGSSQGAIFP (268 aa). Residues 209–239 adopt a coiled-coil conformation; that stretch reads SASALWNDEVDKAEQELRAAQTEFDRQAEVT. In terms of domain architecture, SH3 spans 344 to 404; the sequence is SGTRKARVLY…VPVTYLELLS (61 aa). Residue Ser404 is modified to Phosphoserine.

Belongs to the endophilin family. As to quaternary structure, homodimer, and heterodimer with SH3GLB1.

It is found in the cytoplasm. The protein is Endophilin-B2 of Rattus norvegicus (Rat).